We begin with the raw amino-acid sequence, 570 residues long: Repressible high-affinity phosphate permease (570 aa).

Over methionine 1–aspartate 61 the chain is Cytoplasmic. Residues serine 62–glycine 82 form a helical membrane-spanning segment. Over glutamate 83–lysine 95 the chain is Extracellular. The helical transmembrane segment at leucine 96 to phenylalanine 116 threads the bilayer. The Cytoplasmic segment spans residues glycine 117 to serine 120. The helical transmembrane segment at methionine 121–glycine 141 threads the bilayer. The Extracellular portion of the chain corresponds to serine 142–proline 143. A helical transmembrane segment spans residues serine 144 to glycine 164. The Cytoplasmic segment spans residues aspartate 165–methionine 186. The helical transmembrane segment at glycine 187 to valine 207 threads the bilayer. Residues threonine 208–arginine 237 lie on the Extracellular side of the membrane. Residues threonine 238–proline 258 form a helical membrane-spanning segment. The Cytoplasmic segment spans residues glutamate 259–asparagine 325. A helical transmembrane segment spans residues alanine 326–valine 346. Residues serine 347–threonine 374 lie on the Extracellular side of the membrane. A helical membrane pass occupies residues alanine 375–phenylalanine 395. The Cytoplasmic segment spans residues threonine 396–lysine 403. A helical membrane pass occupies residues proline 404 to tyrosine 424. At lysine 425 to leucine 433 the chain is on the extracellular side. The chain crosses the membrane as a helical span at residues alanine 434–valine 454. Topologically, residues proline 455–histidine 468 are cytoplasmic. A helical transmembrane segment spans residues glycine 469–leucine 489. The Extracellular segment spans residues arginine 490–asparagine 505. Residues histidine 506–proline 526 form a helical membrane-spanning segment. The Cytoplasmic segment spans residues glutamate 527 to alanine 570. Acidic residues predominate over residues serine 537–glutamate 546. The segment at serine 537–alanine 570 is disordered. The span at glutamate 547–glutamate 560 shows a compositional bias: basic and acidic residues. The span at alanine 561–alanine 570 shows a compositional bias: polar residues.

The protein belongs to the major facilitator superfamily. Sugar transporter (TC 2.A.1.1) family.

It localises to the cell membrane. With respect to regulation, phosphate transport activity is competitively inhibited by arsenate. Functionally, high-affinity transporter for external inorganic phosphate. Acts probably as a H(+)-phosphate symporter. In Neurospora crassa (strain ATCC 24698 / 74-OR23-1A / CBS 708.71 / DSM 1257 / FGSC 987), this protein is Repressible high-affinity phosphate permease.